A 266-amino-acid polypeptide reads, in one-letter code: Hydroxyethylthiazole kinase (266 aa).

M45 lines the substrate pocket. Residues R120 and T165 each coordinate ATP. A192 is a binding site for substrate.

This sequence belongs to the Thz kinase family. Requires Mg(2+) as cofactor.

It carries out the reaction 5-(2-hydroxyethyl)-4-methylthiazole + ATP = 4-methyl-5-(2-phosphooxyethyl)-thiazole + ADP + H(+). Its pathway is cofactor biosynthesis; thiamine diphosphate biosynthesis; 4-methyl-5-(2-phosphoethyl)-thiazole from 5-(2-hydroxyethyl)-4-methylthiazole: step 1/1. In terms of biological role, catalyzes the phosphorylation of the hydroxyl group of 4-methyl-5-beta-hydroxyethylthiazole (THZ). This Psychrobacter sp. (strain PRwf-1) protein is Hydroxyethylthiazole kinase.